A 295-amino-acid polypeptide reads, in one-letter code: 3-hydroxy-5-phosphonooxypentane-2,4-dione thiolase (295 aa).

Lysine 203 functions as the Schiff-base intermediate with substrate in the catalytic mechanism.

Belongs to the DeoC/FbaB aldolase family. As to quaternary structure, homodecamer.

It localises to the cytoplasm. The enzyme catalyses dihydroxyacetone phosphate + acetyl-CoA = 3-hydroxy-2,4-dioxopentyl phosphate + CoA. Involved in the degradation of phospho-AI-2, thereby terminating induction of the lsr operon and closing the AI-2 signaling cycle. Catalyzes the transfer of an acetyl moiety from 3-hydroxy-5-phosphonooxypentane-2,4-dione to CoA to form glycerone phosphate and acetyl-CoA. The protein is 3-hydroxy-5-phosphonooxypentane-2,4-dione thiolase of Klebsiella pneumoniae subsp. pneumoniae (strain ATCC 700721 / MGH 78578).